The primary structure comprises 433 residues: MLSVIILAAGKGTRMRSSLPKTLHTICGEPMLFYILETAFSISDDVHLILHHQQERIKEAVLERFKGVIFHTQIVEKYSGTGGAIMQKDKTPISTKHERVLILNADMPLITKDALAPLLESKNNAIGLLHLADPKGYGRVVLENHQVKKIVEEKDANDEEKEIKSVNAGVYGFERDFLEKYLPKLHDQNAQKEYYLTDLIALGINENETIDAIFLKEECFLGVNSQTERAKAEEIMLERLRKNAMDLGVVMQLPNSIYLEKGVSFKGECVLEQGVRLIGNCLIENAHIKAYSVIEESQIVNSSVGPFAHARPKSVICNSHVGNFVETKNAKLQGTKAGHLSYLGDCEIGKNTNVGAGVITCNYDGKKKHQTIIGENVFIGSDSQLVAPINIGSNVLIGSGTTITKDIPSGSLSLSRAPQTNIENGYFKFFKKP.

The segment at 1 to 226 (MLSVIILAAG…EECFLGVNSQ (226 aa)) is pyrophosphorylase. UDP-N-acetyl-alpha-D-glucosamine is bound by residues 7–10 (LAAG), lysine 21, and 80–81 (GT). Aspartate 106 serves as a coordination point for Mg(2+). The UDP-N-acetyl-alpha-D-glucosamine site is built by glycine 138, glutamate 152, asparagine 167, and asparagine 224. Asparagine 224 serves as a coordination point for Mg(2+). The interval 227–247 (TERAKAEEIMLERLRKNAMDL) is linker. Positions 248–433 (GVVMQLPNSI…NGYFKFFKKP (186 aa)) are N-acetyltransferase. Arginine 311 and lysine 328 together coordinate UDP-N-acetyl-alpha-D-glucosamine. Histidine 339 functions as the Proton acceptor in the catalytic mechanism. The UDP-N-acetyl-alpha-D-glucosamine site is built by tyrosine 342 and asparagine 353. Acetyl-CoA-binding positions include alanine 356, 362-363 (NY), serine 381, serine 399, and arginine 416.

This sequence in the N-terminal section; belongs to the N-acetylglucosamine-1-phosphate uridyltransferase family. In the C-terminal section; belongs to the transferase hexapeptide repeat family. As to quaternary structure, homotrimer. Requires Mg(2+) as cofactor.

The protein localises to the cytoplasm. It catalyses the reaction alpha-D-glucosamine 1-phosphate + acetyl-CoA = N-acetyl-alpha-D-glucosamine 1-phosphate + CoA + H(+). It carries out the reaction N-acetyl-alpha-D-glucosamine 1-phosphate + UTP + H(+) = UDP-N-acetyl-alpha-D-glucosamine + diphosphate. It functions in the pathway nucleotide-sugar biosynthesis; UDP-N-acetyl-alpha-D-glucosamine biosynthesis; N-acetyl-alpha-D-glucosamine 1-phosphate from alpha-D-glucosamine 6-phosphate (route II): step 2/2. The protein operates within nucleotide-sugar biosynthesis; UDP-N-acetyl-alpha-D-glucosamine biosynthesis; UDP-N-acetyl-alpha-D-glucosamine from N-acetyl-alpha-D-glucosamine 1-phosphate: step 1/1. Its pathway is bacterial outer membrane biogenesis; LPS lipid A biosynthesis. Its function is as follows. Catalyzes the last two sequential reactions in the de novo biosynthetic pathway for UDP-N-acetylglucosamine (UDP-GlcNAc). The C-terminal domain catalyzes the transfer of acetyl group from acetyl coenzyme A to glucosamine-1-phosphate (GlcN-1-P) to produce N-acetylglucosamine-1-phosphate (GlcNAc-1-P), which is converted into UDP-GlcNAc by the transfer of uridine 5-monophosphate (from uridine 5-triphosphate), a reaction catalyzed by the N-terminal domain. The sequence is that of Bifunctional protein GlmU from Helicobacter pylori (strain ATCC 700392 / 26695) (Campylobacter pylori).